A 472-amino-acid chain; its full sequence is FAD-dependent monooxygenase ltmM (472 aa).

The chain crosses the membrane as a helical span at residues 7–27 (VIIVGGSVAGLSLAHCLEKIG). Residues Glu-34, Gly-48, and Arg-107 each contribute to the FAD site. Asn-186 is a glycosylation site (N-linked (GlcNAc...) asparagine). 2 residues coordinate FAD: Asp-306 and Ala-319. A helical transmembrane segment spans residues 450-470 (IVYALYLVAAAAFILYCLSSL).

This sequence belongs to the paxM FAD-dependent monooxygenase family. The cofactor is FAD.

The protein resides in the membrane. It participates in secondary metabolite biosynthesis. FAD-dependent monooxygenase; part of the gene cluster that mediates the biosynthesis of lolitrems, indole-diterpene mycotoxins that are potent tremorgens in mammals, and are synthesized by clavicipitaceous fungal endophytes in association with their grass hosts. The geranylgeranyl diphosphate (GGPP) synthase ltmG is proposed to catalyze the first step in lolitremB biosynthesis. LtmG catalyzes a series of iterative condensations of isopentenyl diphosphate (IPP) with dimethylallyl diphosphate (DMAPP), geranyl diphosphate (GPP), and farnesyl diphosphate (FPP), to form GGPP. GGPP then condenses with indole-3-glycerol phosphate to form 3-geranylgeranylindole, an acyclic intermediate, to be incorporated into paxilline. Either ltmG or ltmC could be responsible for this step, as both are putative prenyl transferases. The FAD-dependent monooxygenase ltmM then catalyzes the epoxidation of the two terminal alkenes of the geranylgeranyl moiety, which is subsequently cyclized by ltmB, to paspaline. The cytochrome P450 monooxygenases ltmQ and ltmP can sequentially oxidize paspaline to terpendole E and terpendole F. Alternatively, ltmP converts paspaline to an intermediate which is oxidized by ltmQ to terpendole F. LtmF, ltmK, ltmE and ltmJ appear to be unique to the epichloe endophytes. The prenyltransferase ltmF is involved in the 27-hydroxyl-O-prenylation. The cytochrome P450 monooxygenase ltmK is required for the oxidative acetal ring formation. The multi-functional prenyltransferase ltmE is required for C20- and C21-prenylations of the indole ring of paspalanes and acts together with the cytochrome P450 monooxygenase ltmJ to yield lolitremanes by multiple oxidations and ring closures. The stereoisomer pairs of lolitriol and lolitrem N or lolitrem B and lolitrem F may be attributed to variations in the way in which ring closure can occur under the action of ltmJ. While the major product of this pathway is lolitrem B, the prenyl transferases and cytochrome P450 monooxygenases identified in this pathway have a remarkable versatility in their regio- and stereo-specificities to generate a diverse range of metabolites that are products of a metabolic grid rather than a linear pathway. This Epichloe festucae var. lolii (Neotyphodium lolii) protein is FAD-dependent monooxygenase ltmM (ltmM).